The primary structure comprises 130 residues: MAENQYYGTGRRKSSAARVFIKPGTGNIVINKRSLEVYFGRPTARMVVNQPLELVEMTDKLDLFITVSGGGISGQAGAIRHGITRALMQFDETLRPALRAAGYVTRDARCVERKKVGLRKARKKPQFSKR.

It belongs to the universal ribosomal protein uS9 family.

This Aliivibrio salmonicida (strain LFI1238) (Vibrio salmonicida (strain LFI1238)) protein is Small ribosomal subunit protein uS9.